A 240-amino-acid polypeptide reads, in one-letter code: Ubiquinone biosynthesis O-methyltransferase (240 aa).

The S-adenosyl-L-methionine site is built by arginine 44, glycine 64, aspartate 85, and methionine 129.

The protein belongs to the methyltransferase superfamily. UbiG/COQ3 family.

It catalyses the reaction a 3-demethylubiquinol + S-adenosyl-L-methionine = a ubiquinol + S-adenosyl-L-homocysteine + H(+). The enzyme catalyses a 3-(all-trans-polyprenyl)benzene-1,2-diol + S-adenosyl-L-methionine = a 2-methoxy-6-(all-trans-polyprenyl)phenol + S-adenosyl-L-homocysteine + H(+). Its pathway is cofactor biosynthesis; ubiquinone biosynthesis. Its function is as follows. O-methyltransferase that catalyzes the 2 O-methylation steps in the ubiquinone biosynthetic pathway. This chain is Ubiquinone biosynthesis O-methyltransferase, found in Escherichia fergusonii (strain ATCC 35469 / DSM 13698 / CCUG 18766 / IAM 14443 / JCM 21226 / LMG 7866 / NBRC 102419 / NCTC 12128 / CDC 0568-73).